The chain runs to 217 residues: tRNA (guanine-N(7)-)-methyltransferase (217 aa).

S-adenosyl-L-methionine-binding residues include Glu44, Glu69, Asp96, and Asp118. Residue Asp118 is part of the active site. Substrate contacts are provided by residues Lys122, Asp154, and 191-194 (TEYE).

This sequence belongs to the class I-like SAM-binding methyltransferase superfamily. TrmB family.

The catalysed reaction is guanosine(46) in tRNA + S-adenosyl-L-methionine = N(7)-methylguanosine(46) in tRNA + S-adenosyl-L-homocysteine. It functions in the pathway tRNA modification; N(7)-methylguanine-tRNA biosynthesis. In terms of biological role, catalyzes the formation of N(7)-methylguanine at position 46 (m7G46) in tRNA. The sequence is that of tRNA (guanine-N(7)-)-methyltransferase from Bacillus anthracis (strain CDC 684 / NRRL 3495).